The following is a 673-amino-acid chain: Pesticin receptor (673 aa).

The N-terminal stretch at 1 to 22 (MKMTRLYPLALGGLLLPAIANA) is a signal peptide. A TonB box motif is present at residues 30-37 (STLEVTAS). Residues 41-155 (SRSASANNVS…QGGIINIVTQ (115 aa)) form the TBDR plug domain. The 513-residue stretch at 160–672 (TPRGYIEGGV…TVGINTRIDF (513 aa)) folds into the TBDR beta-barrel domain. A TonB C-terminal box motif is present at residues 657–673 (QVNMGRTVGINTRIDFF).

It belongs to the TonB-dependent receptor family.

It localises to the cell outer membrane. In terms of biological role, receptor for the bacteriocin pesticin and for the siderophore yersiniabactin. The chain is Pesticin receptor (fyuA) from Yersinia enterocolitica serotype O:8 / biotype 1B (strain NCTC 13174 / 8081).